The sequence spans 278 residues: Keratin-associated protein 5-1 (278 aa).

8 tandem repeats follow at residues 42-45 (CCVP), 48-51 (CCKP), 130-133 (CCVP), 136-139 (CCKP), 142-145 (CCVP), 239-242 (CCKP), 258-261 (CCKP), and 268-271 (CCVP). Residues 42–271 (CCVPVCCCKP…CCSQSSCCVP (230 aa)) are 8 X 4 AA repeats of C-C-X-P.

Belongs to the KRTAP type 5 family. As to quaternary structure, interacts with hair keratins. As to expression, expressed in hair root but not in skin. Expressed also in lung, pancreas, ovary, testis.

Functionally, in the hair cortex, hair keratin intermediate filaments are embedded in an interfilamentous matrix, consisting of hair keratin-associated protein (KRTAP), which are essential for the formation of a rigid and resistant hair shaft through their extensive disulfide bond cross-linking with abundant cysteine residues of hair keratins. The matrix proteins include the high-sulfur and high-glycine-tyrosine keratins. The protein is Keratin-associated protein 5-1 (KRTAP5-1) of Homo sapiens (Human).